The chain runs to 114 residues: uncharacterized protein (114 aa).

Its function is as follows. May be associated with transposition functions of transposon Tn903. This is an uncharacterized protein from Escherichia coli.